The sequence spans 400 residues: F-box/kelch-repeat protein At4g19870 (400 aa).

The span at M1–K10 shows a compositional bias: basic and acidic residues. The segment at M1–L33 is disordered. Residues S19 to L33 are compositionally biased toward low complexity. An F-box domain is found at S27–R73. Kelch repeat units lie at residues E146–G192, I194–E240, and E242–Y284.

The chain is F-box/kelch-repeat protein At4g19870 from Arabidopsis thaliana (Mouse-ear cress).